The sequence spans 125 residues: Small ribosomal subunit protein uS13 (125 aa).

Residues 93-125 (RKGLPVRGQRTKTNARTRKGPKRTVAGKKKAGR) form a disordered region.

It belongs to the universal ribosomal protein uS13 family. As to quaternary structure, part of the 30S ribosomal subunit. Forms a loose heterodimer with protein S19. Forms two bridges to the 50S subunit in the 70S ribosome.

Functionally, located at the top of the head of the 30S subunit, it contacts several helices of the 16S rRNA. In the 70S ribosome it contacts the 23S rRNA (bridge B1a) and protein L5 of the 50S subunit (bridge B1b), connecting the 2 subunits; these bridges are implicated in subunit movement. Contacts the tRNAs in the A and P-sites. In Arthrobacter sp. (strain FB24), this protein is Small ribosomal subunit protein uS13.